Here is a 277-residue protein sequence, read N- to C-terminus: Inhibition of morphological differentiation protein (277 aa).

Residues aspartate 18, aspartate 20, and aspartate 192 each coordinate Mg(2+).

This sequence belongs to the HAD-like hydrolase superfamily. SerB family.

The polypeptide is Inhibition of morphological differentiation protein (Streptomyces azureus).